The sequence spans 943 residues: Centromere protein C (943 aa).

A Glycyl lysine isopeptide (Lys-Gly) (interchain with G-Cter in SUMO2) cross-link involves residue Lys-45. Residues 70–91 form a disordered region; the sequence is CIQSPSKECQKSHPKSVPVSSK. Ser-73 and Ser-96 each carry phosphoserine. Lys-119 is covalently cross-linked (Glycyl lysine isopeptide (Lys-Gly) (interchain with G-Cter in SUMO2)). At Thr-130 the chain carries Phosphothreonine. A Glycyl lysine isopeptide (Lys-Gly) (interchain with G-Cter in SUMO2) cross-link involves residue Lys-134. Ser-146 carries the phosphoserine modification. Lys-180 participates in a covalent cross-link: Glycyl lysine isopeptide (Lys-Gly) (interchain with G-Cter in SUMO2). Thr-183 is subject to Phosphothreonine. Ser-189 carries the phosphoserine modification. Residues Lys-212 and Lys-217 each participate in a glycyl lysine isopeptide (Lys-Gly) (interchain with G-Cter in SUMO2) cross-link. Positions 224–239 are enriched in basic and acidic residues; the sequence is VSDEEDKTSEGQERKP. The interval 224-250 is disordered; that stretch reads VSDEEDKTSEGQERKPSGSSQNRIRDS. Phosphoserine is present on Ser-225. Glycyl lysine isopeptide (Lys-Gly) (interchain with G-Cter in SUMO2) cross-links involve residues Lys-238 and Lys-260. Residues 259–273 carry the Nuclear localization signal motif; it reads KKSFSTLFLETVKRK. Ser-261 bears the Phosphoserine mark. Glycyl lysine isopeptide (Lys-Gly) (interchain with G-Cter in SUMO2) cross-links involve residues Lys-271, Lys-273, and Lys-297. A phosphoserine mark is found at Ser-316, Ser-333, Ser-376, and Ser-397. A disordered region spans residues 358–377; the sequence is LANDKHSHKPHPVETSQPSD. The segment at 403-513 is disordered; it reads YSKNAEKPSR…SKNKLVPEEV (111 aa). The span at 412-426 shows a compositional bias: basic residues; that stretch reads RSKRTIKQKQRRKFM. Basic and acidic residues-rich tracts occupy residues 438–463 and 488–510; these read QSKD…RNME and TRKD…KLVP. Ser-439 is modified (phosphoserine). Lys-440 is covalently cross-linked (Glycyl lysine isopeptide (Lys-Gly) (interchain with G-Cter in SUMO2)). Positions 484–499 match the Nuclear localization signal motif; the sequence is KKSSTRKDKEESKKKR. Phosphoserine is present on Ser-528. Residue Lys-534 forms a Glycyl lysine isopeptide (Lys-Gly) (interchain with G-Cter in SUMO2) linkage. 2 disordered regions span residues 537–587 and 632–717; these read ESPV…ATKG and DCSR…KQSK. Ser-538 bears the Phosphoserine mark. The Nuclear localization signal motif lies at 558–574; the sequence is RKSTKKTNQSSKNIRKK. Residues 570 to 583 are compositionally biased toward basic residues; the sequence is NIRKKTIPLKRQKT. The span at 633-672 shows a compositional bias: polar residues; sequence CSRSTRSSKNEDNIMTAQNVPLKPQTSGYTCNIPTESNLD. A Glycyl lysine isopeptide (Lys-Gly) (interchain with G-Cter in SUMO2) cross-link involves residue Lys-677. Phosphoserine occurs at positions 684, 709, and 710. The span at 706-715 shows a compositional bias: basic and acidic residues; that stretch reads VHGSSDDSKQ. Lys-727 is covalently cross-linked (Glycyl lysine isopeptide (Lys-Gly) (interchain with G-Cter in SUMO2)). Thr-734 bears the Phosphothreonine mark. Residues 737-759 form an MIF2 homology domain II region; it reads VRRTKRTRLKPLEYWRGERIDYQ. A phosphoserine mark is found at Ser-763 and Ser-773. The Nuclear localization signal signature appears at 780 to 798; that stretch reads KRKAKENIGKVNKKSNKKR. A Glycyl lysine isopeptide (Lys-Gly) (interchain with G-Cter in SUMO2) cross-link involves residue Lys-807. An MIF2 homology domain III region spans residues 890 to 943; sequence LVFYVNFGDLLCTLHETPYILSTGDSFYVPSGNYYNIKNLRNEESVLLFTQIKR.

It belongs to the CENP-C/MIF2 family. As to quaternary structure, oligomer. Component of the CENPA-NAC complex, at least composed of CENPA, CENPC, CENPH, CENPM, CENPN, CENPT and CENPU. The CENPA-NAC complex interacts with the CENPA-CAD complex, composed of CENPI, CENPK, CENPL, CENPO, CENPP, CENPQ, CENPR and CENPS. Binds to DAXX. Interacts with DNMT3B. Interacts directly with CENPA. Identified in a centromere complex containing histones H2A, H2B and H4, and at least CENPA, CENPB, CENPC, CENPT, CENPN, HJURP, SUPT16H, SSRP1 and RSF1. Interacts with MEIKIN.

It is found in the nucleus. It localises to the chromosome. The protein localises to the centromere. Its subcellular location is the kinetochore. In terms of biological role, component of the CENPA-NAC (nucleosome-associated) complex, a complex that plays a central role in assembly of kinetochore proteins, mitotic progression and chromosome segregation. The CENPA-NAC complex recruits the CENPA-CAD (nucleosome distal) complex and may be involved in incorporation of newly synthesized CENPA into centromeres. CENPC recruits DNA methylation and DNMT3B to both centromeric and pericentromeric satellite repeats and regulates the histone code in these regions. The polypeptide is Centromere protein C (CENPC) (Homo sapiens (Human)).